A 215-amino-acid polypeptide reads, in one-letter code: Holliday junction branch migration complex subunit RuvA (215 aa).

Residues 1–67 are domain I; that stretch reads MIGWLQGERI…DDGSTLFGFC (67 aa). Residues 68–146 form a domain II region; sequence DQQERDLFRT…NWAPLQEPSL (79 aa). Positions 147–158 are flexible linker; sequence SLVDRSDVKAIP. The tract at residues 159–215 is domain III; sequence LGEPCLRDLQITLETLGYEDLEIRRAMRAVASGPDVPAEDDGDAWLRASLKWLSQSA.

This sequence belongs to the RuvA family. Homotetramer. Forms an RuvA(8)-RuvB(12)-Holliday junction (HJ) complex. HJ DNA is sandwiched between 2 RuvA tetramers; dsDNA enters through RuvA and exits via RuvB. An RuvB hexamer assembles on each DNA strand where it exits the tetramer. Each RuvB hexamer is contacted by two RuvA subunits (via domain III) on 2 adjacent RuvB subunits; this complex drives branch migration. In the full resolvosome a probable DNA-RuvA(4)-RuvB(12)-RuvC(2) complex forms which resolves the HJ.

It is found in the cytoplasm. The RuvA-RuvB-RuvC complex processes Holliday junction (HJ) DNA during genetic recombination and DNA repair, while the RuvA-RuvB complex plays an important role in the rescue of blocked DNA replication forks via replication fork reversal (RFR). RuvA specifically binds to HJ cruciform DNA, conferring on it an open structure. The RuvB hexamer acts as an ATP-dependent pump, pulling dsDNA into and through the RuvAB complex. HJ branch migration allows RuvC to scan DNA until it finds its consensus sequence, where it cleaves and resolves the cruciform DNA. The sequence is that of Holliday junction branch migration complex subunit RuvA from Synechococcus sp. (strain WH7803).